A 32-amino-acid polypeptide reads, in one-letter code: Defensin-3 (32 aa).

3 cysteine pairs are disulfide-bonded: cysteine 3/cysteine 31, cysteine 5/cysteine 20, and cysteine 10/cysteine 30.

Its subcellular location is the secreted. Functionally, has antibacterial activity against the Gram-negative bacterium E.coli and the Gram-positive bacteria L.monocytogenes and S.aureus. Has antifungal activity against C.albicans. The polypeptide is Defensin-3 (Papio hamadryas (Hamadryas baboon)).